The primary structure comprises 151 residues: Putative pre-16S rRNA nuclease (151 aa).

It belongs to the YqgF nuclease family.

It localises to the cytoplasm. In terms of biological role, could be a nuclease involved in processing of the 5'-end of pre-16S rRNA. In Methylococcus capsulatus (strain ATCC 33009 / NCIMB 11132 / Bath), this protein is Putative pre-16S rRNA nuclease.